A 283-amino-acid chain; its full sequence is Putative sugar uptake protein BC_0219 (283 aa).

Transmembrane regions (helical) follow at residues 4–21, 26–48, 52–71, 84–106, 110–132, 151–173, 178–195, 208–230, 234–253, and 260–279; these read LLAL…LVSV, GAYS…MYVF, ALTM…WALG, VSTT…GVIA, WTTT…GVVF, LLTL…WYNI, AILP…VLTS, ALSG…RVGV, FPLS…VFLG, and QLIF…VLLG.

It belongs to the GRP transporter (TC 2.A.7.5) family.

The protein resides in the cell membrane. This Bacillus cereus (strain ATCC 14579 / DSM 31 / CCUG 7414 / JCM 2152 / NBRC 15305 / NCIMB 9373 / NCTC 2599 / NRRL B-3711) protein is Putative sugar uptake protein BC_0219.